The sequence spans 452 residues: Glutamyl-tRNA(Gln) amidotransferase subunit A (452 aa).

Active-site charge relay system residues include Lys-56 and Ser-131. Ser-155 serves as the catalytic Acyl-ester intermediate.

This sequence belongs to the amidase family. GatA subfamily. Heterotrimer of A, B and C subunits.

The catalysed reaction is L-glutamyl-tRNA(Gln) + L-glutamine + ATP + H2O = L-glutaminyl-tRNA(Gln) + L-glutamate + ADP + phosphate + H(+). Allows the formation of correctly charged Gln-tRNA(Gln) through the transamidation of misacylated Glu-tRNA(Gln) in organisms which lack glutaminyl-tRNA synthetase. The reaction takes place in the presence of glutamine and ATP through an activated gamma-phospho-Glu-tRNA(Gln). The chain is Glutamyl-tRNA(Gln) amidotransferase subunit A from Campylobacter concisus (strain 13826).